The following is a 1037-amino-acid chain: Caspase recruitment domain-containing protein 6 (1037 aa).

An N-acetylalanine modification is found at alanine 2. The CARD domain maps to 3-94; that stretch reads TESTPSEIIE…QSAAICGLRH (92 aa). Serine 154 is modified (phosphoserine). 3 disordered regions span residues 235–270, 669–704, and 887–1037; these read DPEH…TSLS, VSSG…PIQE, and RTSH…GGKH. Residues 242-261 are compositionally biased toward acidic residues; sequence DGEEDFENSETTEFSGEEPS. A compositionally biased stretch (low complexity) spans 690 to 699; sequence LKSSSKSQAL. Polar residues-rich tracts occupy residues 911–928, 938–954, and 963–984; these read ASQQ…SNPA, KSSQ…TVKH, and VPSQ…QTKP. Phosphoserine is present on serine 985. Residues 994-1012 show a composition bias toward pro residues; sequence PSQPWPPQSKPSQPRPPQP. Residues 1023–1037 are compositionally biased toward basic residues; that stretch reads KAHHSKAGQKRGGKH.

Its function is as follows. May be involved in apoptosis. This chain is Caspase recruitment domain-containing protein 6 (CARD6), found in Homo sapiens (Human).